The sequence spans 238 residues: Sugar fermentation stimulation protein homolog (238 aa).

The protein belongs to the SfsA family.

This Bartonella tribocorum (strain CIP 105476 / IBS 506) protein is Sugar fermentation stimulation protein homolog.